Consider the following 714-residue polypeptide: Polyribonucleotide nucleotidyltransferase (714 aa).

Mg(2+) is bound by residues aspartate 489 and aspartate 495. The KH domain maps to proline 556–isoleucine 615. One can recognise an S1 motif domain in the interval glycine 625–lysine 693. The disordered stretch occupies residues serine 691–aspartate 714. The span at proline 700–aspartate 714 shows a compositional bias: basic and acidic residues.

This sequence belongs to the polyribonucleotide nucleotidyltransferase family. Requires Mg(2+) as cofactor.

Its subcellular location is the cytoplasm. It catalyses the reaction RNA(n+1) + phosphate = RNA(n) + a ribonucleoside 5'-diphosphate. In terms of biological role, involved in mRNA degradation. Catalyzes the phosphorolysis of single-stranded polyribonucleotides processively in the 3'- to 5'-direction. This Streptococcus equi subsp. zooepidemicus (strain H70) protein is Polyribonucleotide nucleotidyltransferase.